Reading from the N-terminus, the 573-residue chain is Mitochondrial distribution and morphology protein 34 (573 aa).

Residues 1–195 (MAFNFNWSPL…LPAIIHRLSL (195 aa)) form the SMP-LTD domain. Disordered stretches follow at residues 301–326 (EGLG…SSPL), 349–433 (FSGY…RFPN), 499–521 (SREK…ITDA), and 550–573 (LVNN…AYGQ). The span at 306 to 316 (GLMSPGSPALS) shows a compositional bias: low complexity. Residues 360–373 (RHTKARPTKKRKKR) are compositionally biased toward basic residues. Positions 374–385 (VVDLRKQSKPTD) are enriched in basic and acidic residues. The span at 396 to 409 (TETSTASTTFSSST) shows a compositional bias: low complexity.

It belongs to the MDM34 family. Component of the ER-mitochondria encounter structure (ERMES) or MDM complex, composed of MMM1, MDM10, MDM12 and MDM34.

The protein resides in the mitochondrion outer membrane. In terms of biological role, component of the ERMES/MDM complex, which serves as a molecular tether to connect the endoplasmic reticulum (ER) and mitochondria. Components of this complex are involved in the control of mitochondrial shape and protein biogenesis, and function in nonvesicular lipid trafficking between the ER and mitochondria. MDM34 is required for the interaction of the ER-resident membrane protein MMM1 and the outer mitochondrial membrane-resident beta-barrel protein MDM10. The chain is Mitochondrial distribution and morphology protein 34 from Uncinocarpus reesii (strain UAMH 1704).